The chain runs to 133 residues: Profilin (133 aa).

The protein belongs to the profilin family. Interacts with host TPM1. Interacts with protein A25.

The protein localises to the host cytoplasm. In terms of biological role, participates in either intracellular transport of viral proteins or intercellular spread of the virus. Cellular profilins modulate actin filament dynamics (polymerization and depolymerization) via direct binding to actin through an actin-binding domain as well as by modulation of other actin-binding proteins. In contrast to cellular homologs, the poxvirus profilins seem to bind actin only weakly. The chain is Profilin (OPG171) from Variola virus (isolate Human/India/Ind3/1967) (VARV).